A 455-amino-acid polypeptide reads, in one-letter code: MTQPLHVIILAAGAGKRMKSVLPKVLQPIAGQPMLAHVIDAARELQPAAIHVVHGHGGEAVRQYFAGQPDLQWAEQAQQLGTGHAVAQAMPQVPDLAQVLVLYGDVPLIRAQTLRDLLAQPGRLAVLVADVDDPTGYGRVLRDAEGKVGAIIEQKDATDDQLRVRTINTGIIAAESTALRRWLSQLSNSNAQGEYYLTDVFAFAAHEYTPAEMALVADAQEAEGANDPWQLSQLERAWQRRAVRALCAQGARVRDPARLDIRGTVTVGSDVLIDVDVVLEGKVVLGDGVTVGPFNRLKDVNLGPGTDVRAHCDLEGVVTEGAAQIGPFARLRPGTVLADGVHVGNFVETKKVTLGVGSKANHLTYLGDAVIGSKVNIGAGTITCNYDGVNKSTTTIGDNAFIGSNSSLVAPVTIGDGATIAAGSVITRNAPDGKLTLARARQETIDGWKRPLKKS.

The tract at residues 1-228 (MTQPLHVIIL…AQEAEGANDP (228 aa)) is pyrophosphorylase. Residues 10-13 (LAAG), Lys24, Gln76, 81-82 (GT), 103-105 (YGD), Gly138, Glu153, Asn168, and Asn226 each bind UDP-N-acetyl-alpha-D-glucosamine. Asp105 lines the Mg(2+) pocket. A Mg(2+)-binding site is contributed by Asn226. Residues 229–249 (WQLSQLERAWQRRAVRALCAQ) are linker. Residues 250-455 (GARVRDPARL…DGWKRPLKKS (206 aa)) form an N-acetyltransferase region. Arg332 and Lys350 together coordinate UDP-N-acetyl-alpha-D-glucosamine. The Proton acceptor role is filled by His362. UDP-N-acetyl-alpha-D-glucosamine contacts are provided by Tyr365 and Asn376. Residues Ala379, 385–386 (NY), Ser404, Ala422, and Arg439 contribute to the acetyl-CoA site.

This sequence in the N-terminal section; belongs to the N-acetylglucosamine-1-phosphate uridyltransferase family. The protein in the C-terminal section; belongs to the transferase hexapeptide repeat family. In terms of assembly, homotrimer. Mg(2+) is required as a cofactor.

The protein localises to the cytoplasm. It catalyses the reaction alpha-D-glucosamine 1-phosphate + acetyl-CoA = N-acetyl-alpha-D-glucosamine 1-phosphate + CoA + H(+). It carries out the reaction N-acetyl-alpha-D-glucosamine 1-phosphate + UTP + H(+) = UDP-N-acetyl-alpha-D-glucosamine + diphosphate. It participates in nucleotide-sugar biosynthesis; UDP-N-acetyl-alpha-D-glucosamine biosynthesis; N-acetyl-alpha-D-glucosamine 1-phosphate from alpha-D-glucosamine 6-phosphate (route II): step 2/2. Its pathway is nucleotide-sugar biosynthesis; UDP-N-acetyl-alpha-D-glucosamine biosynthesis; UDP-N-acetyl-alpha-D-glucosamine from N-acetyl-alpha-D-glucosamine 1-phosphate: step 1/1. It functions in the pathway bacterial outer membrane biogenesis; LPS lipid A biosynthesis. Its function is as follows. Catalyzes the last two sequential reactions in the de novo biosynthetic pathway for UDP-N-acetylglucosamine (UDP-GlcNAc). The C-terminal domain catalyzes the transfer of acetyl group from acetyl coenzyme A to glucosamine-1-phosphate (GlcN-1-P) to produce N-acetylglucosamine-1-phosphate (GlcNAc-1-P), which is converted into UDP-GlcNAc by the transfer of uridine 5-monophosphate (from uridine 5-triphosphate), a reaction catalyzed by the N-terminal domain. This Stenotrophomonas maltophilia (strain K279a) protein is Bifunctional protein GlmU.